The primary structure comprises 148 residues: UPF0756 membrane protein CKO_01811 (148 aa).

4 helical membrane passes run 14–34, 51–71, 86–106, and 121–141; these read ALGF…LIIV, LTVG…SGSL, LVAI…VTLM, and VLGV…AGLV.

The protein belongs to the UPF0756 family.

Its subcellular location is the cell membrane. This Citrobacter koseri (strain ATCC BAA-895 / CDC 4225-83 / SGSC4696) protein is UPF0756 membrane protein CKO_01811.